The following is a 92-amino-acid chain: Isoleucine--tRNA ligase (92 aa).

Residues Cys-55, Cys-58, Cys-75, and Cys-78 each contribute to the Zn(2+) site.

The protein belongs to the class-I aminoacyl-tRNA synthetase family. IleS type 1 subfamily. As to quaternary structure, monomer. Zn(2+) is required as a cofactor.

The protein resides in the cytoplasm. The enzyme catalyses tRNA(Ile) + L-isoleucine + ATP = L-isoleucyl-tRNA(Ile) + AMP + diphosphate. Functionally, catalyzes the attachment of isoleucine to tRNA(Ile). As IleRS can inadvertently accommodate and process structurally similar amino acids such as valine, to avoid such errors it has two additional distinct tRNA(Ile)-dependent editing activities. One activity is designated as 'pretransfer' editing and involves the hydrolysis of activated Val-AMP. The other activity is designated 'posttransfer' editing and involves deacylation of mischarged Val-tRNA(Ile). The protein is Isoleucine--tRNA ligase (ileS) of Klebsiella aerogenes (Enterobacter aerogenes).